The primary structure comprises 552 residues: Urocanate hydratase (552 aa).

Residues 49–50, Q127, 173–175, D193, 239–240, 260–264, 270–271, and Y319 each bind NAD(+); these read GG, GMG, NA, QTSAH, and YI. Residue C407 is part of the active site. G489 is a binding site for NAD(+).

Belongs to the urocanase family. NAD(+) is required as a cofactor.

The protein resides in the cytoplasm. The catalysed reaction is 4-imidazolone-5-propanoate = trans-urocanate + H2O. The protein operates within amino-acid degradation; L-histidine degradation into L-glutamate; N-formimidoyl-L-glutamate from L-histidine: step 2/3. Functionally, catalyzes the conversion of urocanate to 4-imidazolone-5-propionate. The chain is Urocanate hydratase from Bacillus thuringiensis (strain Al Hakam).